We begin with the raw amino-acid sequence, 122 residues long: Small ribosomal subunit protein uS13 (122 aa).

The span at Val-98–Thr-116 shows a compositional bias: basic residues. Positions Val-98 to Lys-122 are disordered.

Belongs to the universal ribosomal protein uS13 family. As to quaternary structure, part of the 30S ribosomal subunit. Forms a loose heterodimer with protein S19. Forms two bridges to the 50S subunit in the 70S ribosome.

In terms of biological role, located at the top of the head of the 30S subunit, it contacts several helices of the 16S rRNA. In the 70S ribosome it contacts the 23S rRNA (bridge B1a) and protein L5 of the 50S subunit (bridge B1b), connecting the 2 subunits; these bridges are implicated in subunit movement. Contacts the tRNAs in the A and P-sites. In Campylobacter fetus subsp. fetus (strain 82-40), this protein is Small ribosomal subunit protein uS13.